The following is a 475-amino-acid chain: tRNA modification GTPase MnmE (475 aa).

Residues Arg24, Glu81, and Lys124 each coordinate (6S)-5-formyl-5,6,7,8-tetrahydrofolate. One can recognise a TrmE-type G domain in the interval 220-397; that stretch reads GLSVVLAGQP…LRRELLRLVG (178 aa). Residue Asn230 participates in K(+) binding. Residues 230–235, 249–255, 274–277, and 378–380 contribute to the GTP site; these read NVGKSS, TPIAGTT, DTAG, and SAR. Ser234 provides a ligand contact to Mg(2+). The K(+) site is built by Thr249, Ile251, and Thr254. Thr255 provides a ligand contact to Mg(2+). Position 475 (Lys475) interacts with (6S)-5-formyl-5,6,7,8-tetrahydrofolate.

The protein belongs to the TRAFAC class TrmE-Era-EngA-EngB-Septin-like GTPase superfamily. TrmE GTPase family. Homodimer. Heterotetramer of two MnmE and two MnmG subunits. It depends on K(+) as a cofactor.

Its subcellular location is the cytoplasm. Functionally, exhibits a very high intrinsic GTPase hydrolysis rate. Involved in the addition of a carboxymethylaminomethyl (cmnm) group at the wobble position (U34) of certain tRNAs, forming tRNA-cmnm(5)s(2)U34. This chain is tRNA modification GTPase MnmE, found in Cupriavidus necator (strain ATCC 17699 / DSM 428 / KCTC 22496 / NCIMB 10442 / H16 / Stanier 337) (Ralstonia eutropha).